A 393-amino-acid chain; its full sequence is Probable tRNA sulfurtransferase (393 aa).

Residues D61–E168 form the THUMP domain. Residues L186–L187, Y211–F212, R268, G290, and Q299 contribute to the ATP site.

This sequence belongs to the ThiI family.

The protein localises to the cytoplasm. The catalysed reaction is [ThiI sulfur-carrier protein]-S-sulfanyl-L-cysteine + a uridine in tRNA + 2 reduced [2Fe-2S]-[ferredoxin] + ATP + H(+) = [ThiI sulfur-carrier protein]-L-cysteine + a 4-thiouridine in tRNA + 2 oxidized [2Fe-2S]-[ferredoxin] + AMP + diphosphate. The enzyme catalyses [ThiS sulfur-carrier protein]-C-terminal Gly-Gly-AMP + S-sulfanyl-L-cysteinyl-[cysteine desulfurase] + AH2 = [ThiS sulfur-carrier protein]-C-terminal-Gly-aminoethanethioate + L-cysteinyl-[cysteine desulfurase] + A + AMP + 2 H(+). Its pathway is cofactor biosynthesis; thiamine diphosphate biosynthesis. Catalyzes the ATP-dependent transfer of a sulfur to tRNA to produce 4-thiouridine in position 8 of tRNAs, which functions as a near-UV photosensor. Also catalyzes the transfer of sulfur to the sulfur carrier protein ThiS, forming ThiS-thiocarboxylate. This is a step in the synthesis of thiazole, in the thiamine biosynthesis pathway. The sulfur is donated as persulfide by IscS. The sequence is that of Probable tRNA sulfurtransferase from Lachnospira eligens (strain ATCC 27750 / DSM 3376 / VPI C15-48 / C15-B4) (Eubacterium eligens).